The chain runs to 214 residues: Ribosomal RNA large subunit methyltransferase E (214 aa).

The S-adenosyl-L-methionine site is built by Gly68, Trp70, Asp88, Asp104, and Asp129. Catalysis depends on Lys169, which acts as the Proton acceptor.

It belongs to the class I-like SAM-binding methyltransferase superfamily. RNA methyltransferase RlmE family.

It localises to the cytoplasm. It carries out the reaction uridine(2552) in 23S rRNA + S-adenosyl-L-methionine = 2'-O-methyluridine(2552) in 23S rRNA + S-adenosyl-L-homocysteine + H(+). Functionally, specifically methylates the uridine in position 2552 of 23S rRNA at the 2'-O position of the ribose in the fully assembled 50S ribosomal subunit. The sequence is that of Ribosomal RNA large subunit methyltransferase E from Magnetococcus marinus (strain ATCC BAA-1437 / JCM 17883 / MC-1).